A 90-amino-acid chain; its full sequence is Phosphocarrier protein NPr (90 aa).

The HPr domain occupies 2-90 (TVKQTVEITN…ALFNSGFDED (89 aa)). The active-site Pros-phosphohistidine intermediate is His-16.

This sequence belongs to the HPr family.

It localises to the cytoplasm. In terms of biological role, component of the phosphoenolpyruvate-dependent nitrogen-metabolic phosphotransferase system (nitrogen-metabolic PTS), that seems to be involved in regulating nitrogen metabolism. The phosphoryl group from phosphoenolpyruvate (PEP) is transferred to the phosphoryl carrier protein NPr by enzyme I-Ntr. Phospho-NPr then transfers it to EIIA-Ntr. Could function in the transcriptional regulation of sigma-54 dependent operons in conjunction with the NPr (PtsO) and EIIA-Ntr (PtsN) proteins. In Escherichia coli O157:H7, this protein is Phosphocarrier protein NPr (ptsO).